A 596-amino-acid chain; its full sequence is Aspartate--tRNA(Asp/Asn) ligase (596 aa).

Residue E175 coordinates L-aspartate. The tract at residues 199–202 is aspartate; that stretch reads QQYK. Positions 221 and 454 each coordinate L-aspartate. 221–223 serves as a coordination point for ATP; that stretch reads RDE. E488 lines the ATP pocket. Residue R495 participates in L-aspartate binding. Position 540 to 543 (540 to 543) interacts with ATP; it reads GVDR.

Belongs to the class-II aminoacyl-tRNA synthetase family. Type 1 subfamily. In terms of assembly, homodimer.

It localises to the cytoplasm. The enzyme catalyses tRNA(Asx) + L-aspartate + ATP = L-aspartyl-tRNA(Asx) + AMP + diphosphate. Functionally, aspartyl-tRNA synthetase with relaxed tRNA specificity since it is able to aspartylate not only its cognate tRNA(Asp) but also tRNA(Asn). Reaction proceeds in two steps: L-aspartate is first activated by ATP to form Asp-AMP and then transferred to the acceptor end of tRNA(Asp/Asn). The sequence is that of Aspartate--tRNA(Asp/Asn) ligase from Bartonella henselae (strain ATCC 49882 / DSM 28221 / CCUG 30454 / Houston 1) (Rochalimaea henselae).